Consider the following 226-residue polypeptide: DNA mismatch repair protein MutH (226 aa).

Belongs to the MutH family.

The protein localises to the cytoplasm. Functionally, sequence-specific endonuclease that cleaves unmethylated GATC sequences. It is involved in DNA mismatch repair. The sequence is that of DNA mismatch repair protein MutH from Vibrio parahaemolyticus serotype O3:K6 (strain RIMD 2210633).